We begin with the raw amino-acid sequence, 288 residues long: uncharacterized protein (288 aa).

Residues 92–112 (LPTILVILGVIVVIAIVYAII) traverse the membrane as a helical segment. The interval 121 to 183 (DDHNAASEKA…NDSEKLEIKA (63 aa)) is disordered. Basic and acidic residues-rich tracts occupy residues 136–146 (SKYEIPKDSTL) and 154–181 (SEKETDTKKETKENEDKKKENDSEKLEI). Positions 147-185 (KENQNNSSEKETDTKKETKENEDKKKENDSEKLEIKAAG) form a coiled coil.

It is found in the cell membrane. This is an uncharacterized protein from Bacillus subtilis (strain 168).